The sequence spans 174 residues: Probable NAD(P)H dehydrogenase subunit CRR3, chloroplastic (174 aa).

The transit peptide at 1 to 54 (MAVLSTIYSITRASTPTMASLTNDSPSPLPSSSPSKLPSPTSPSKKPLKLRQVS) directs the protein to the chloroplast. Positions 14 to 24 (STPTMASLTND) are enriched in polar residues. The interval 14 to 71 (STPTMASLTNDSPSPLPSSSPSKLPSPTSPSKKPLKLRQVSKQMGSQNQQRRGNKPSI) is disordered. The span at 30 to 45 (PSSSPSKLPSPTSPSK) shows a compositional bias: low complexity. Positions 53–64 (VSKQMGSQNQQR) are enriched in polar residues. A helical transmembrane segment spans residues 140–160 (FTIQWILPIWIMSLLVACGVI).

It localises to the plastid. The protein resides in the chloroplast thylakoid membrane. In terms of biological role, probable subunit of the chloroplast NAD(P)H dehydrogenase (NDH) complex of the photosynthetic electron transport chain. Required for both formation and activity of NDH. May function in assembly or stabilization of the NDH complex. The protein is Probable NAD(P)H dehydrogenase subunit CRR3, chloroplastic of Arabidopsis thaliana (Mouse-ear cress).